A 358-amino-acid chain; its full sequence is Heme A synthase (358 aa).

8 helical membrane-spanning segments follow: residues 22–42 (IQVW…VGGA), 107–127 (VLGR…WVTK), 133–153 (IFLQ…IGWW), 172–192 (LAIH…LSRG), 208–228 (FAGW…LVAG), 269–289 (FVHR…ALYV), 302–322 (AIFL…TLLH), and 324–344 (VPIS…CFSV). His271 serves as a coordination point for heme. His332 provides a ligand contact to heme.

The protein belongs to the COX15/CtaA family. Type 2 subfamily. As to quaternary structure, interacts with CtaB. Heme b serves as cofactor.

The protein localises to the cell membrane. The enzyme catalyses Fe(II)-heme o + 2 A + H2O = Fe(II)-heme a + 2 AH2. The protein operates within porphyrin-containing compound metabolism; heme A biosynthesis; heme A from heme O: step 1/1. Functionally, catalyzes the conversion of heme O to heme A by two successive hydroxylations of the methyl group at C8. The first hydroxylation forms heme I, the second hydroxylation results in an unstable dihydroxymethyl group, which spontaneously dehydrates, resulting in the formyl group of heme A. This is Heme A synthase from Bartonella bacilliformis (strain ATCC 35685 / KC583 / Herrer 020/F12,63).